The sequence spans 283 residues: Elongation factor Ts (283 aa).

The segment at 79–82 (TDFV) is involved in Mg(2+) ion dislocation from EF-Tu.

This sequence belongs to the EF-Ts family.

It is found in the cytoplasm. Associates with the EF-Tu.GDP complex and induces the exchange of GDP to GTP. It remains bound to the aminoacyl-tRNA.EF-Tu.GTP complex up to the GTP hydrolysis stage on the ribosome. The polypeptide is Elongation factor Ts (Shewanella amazonensis (strain ATCC BAA-1098 / SB2B)).